The primary structure comprises 198 residues: Recombination protein RecR (198 aa).

The C4-type zinc finger occupies 56–71 (CGVCGNVDTSNPCGIC). The 96-residue stretch at 79–174 (RSICVVEEVA…RVTQLAHGLP (96 aa)) folds into the Toprim domain.

It belongs to the RecR family.

In terms of biological role, may play a role in DNA repair. It seems to be involved in an RecBC-independent recombinational process of DNA repair. It may act with RecF and RecO. This is Recombination protein RecR from Novosphingobium aromaticivorans (strain ATCC 700278 / DSM 12444 / CCUG 56034 / CIP 105152 / NBRC 16084 / F199).